Reading from the N-terminus, the 262-residue chain is Acyl-[acyl-carrier-protein]--UDP-N-acetylglucosamine O-acyltransferase (262 aa).

Belongs to the transferase hexapeptide repeat family. LpxA subfamily. In terms of assembly, homotrimer.

The protein resides in the cytoplasm. The enzyme catalyses a (3R)-hydroxyacyl-[ACP] + UDP-N-acetyl-alpha-D-glucosamine = a UDP-3-O-[(3R)-3-hydroxyacyl]-N-acetyl-alpha-D-glucosamine + holo-[ACP]. It functions in the pathway glycolipid biosynthesis; lipid IV(A) biosynthesis; lipid IV(A) from (3R)-3-hydroxytetradecanoyl-[acyl-carrier-protein] and UDP-N-acetyl-alpha-D-glucosamine: step 1/6. Its function is as follows. Involved in the biosynthesis of lipid A, a phosphorylated glycolipid that anchors the lipopolysaccharide to the outer membrane of the cell. The chain is Acyl-[acyl-carrier-protein]--UDP-N-acetylglucosamine O-acyltransferase from Paraburkholderia phytofirmans (strain DSM 17436 / LMG 22146 / PsJN) (Burkholderia phytofirmans).